The sequence spans 104 residues: Large ribosomal subunit protein uL24 (104 aa).

Belongs to the universal ribosomal protein uL24 family. In terms of assembly, part of the 50S ribosomal subunit.

In terms of biological role, one of two assembly initiator proteins, it binds directly to the 5'-end of the 23S rRNA, where it nucleates assembly of the 50S subunit. One of the proteins that surrounds the polypeptide exit tunnel on the outside of the subunit. The chain is Large ribosomal subunit protein uL24 from Methylorubrum extorquens (strain PA1) (Methylobacterium extorquens).